The primary structure comprises 463 residues: Glycine--tRNA ligase (463 aa).

2 residues coordinate substrate: arginine 98 and glutamate 174. Residues 206–208 (RNE), 216–221 (FRTREF), 290–291 (EL), and 334–337 (GADR) contribute to the ATP site. Position 221–225 (221–225 (FEQME)) interacts with substrate. Substrate is bound at residue 330 to 334 (EPSLG).

It belongs to the class-II aminoacyl-tRNA synthetase family. In terms of assembly, homodimer.

Its subcellular location is the cytoplasm. The enzyme catalyses tRNA(Gly) + glycine + ATP = glycyl-tRNA(Gly) + AMP + diphosphate. In terms of biological role, catalyzes the attachment of glycine to tRNA(Gly). This Staphylococcus aureus (strain Mu50 / ATCC 700699) protein is Glycine--tRNA ligase.